Here is a 125-residue protein sequence, read N- to C-terminus: Small ribosomal subunit protein bS6 (125 aa).

A disordered region spans residues 101–125 (PMMKEEKAKNLLAPQSDAAEPTAAA).

The protein belongs to the bacterial ribosomal protein bS6 family.

Functionally, binds together with bS18 to 16S ribosomal RNA. This chain is Small ribosomal subunit protein bS6, found in Laribacter hongkongensis (strain HLHK9).